The chain runs to 351 residues: DNA-directed RNA polymerase subunit alpha (351 aa).

The tract at residues 1-236 (MSVNTKNWQE…DQLTLFVHFE (236 aa)) is alpha N-terminal domain (alpha-NTD). The tract at residues 256 to 351 (DDANQLNRYL…AKKLEQELLG (96 aa)) is alpha C-terminal domain (alpha-CTD).

It belongs to the RNA polymerase alpha chain family. In terms of assembly, homodimer. The RNAP catalytic core consists of 2 alpha, 1 beta, 1 beta' and 1 omega subunit. When a sigma factor is associated with the core the holoenzyme is formed, which can initiate transcription.

The catalysed reaction is RNA(n) + a ribonucleoside 5'-triphosphate = RNA(n+1) + diphosphate. DNA-dependent RNA polymerase catalyzes the transcription of DNA into RNA using the four ribonucleoside triphosphates as substrates. This is DNA-directed RNA polymerase subunit alpha from Erythrobacter litoralis (strain HTCC2594).